The primary structure comprises 1788 residues: Protein TIC 214 (1788 aa).

6 helical membrane-spanning segments follow: residues 25–45, 70–90, 95–115, 132–152, 180–200, and 223–243; these read IINSVVVVGLYYGFFTTFSIG, IGFIAGQLMMFISIYYAPLHL, PHTITALVLPYLLFHFFWNNH, LNIQCIFLNSLIFQLFNHFIL, VGWLVGHIFFMKWVELVLFWI, and IFSILLFIVCIYYLGRMPSPL. Disordered regions lie at residues 248 to 297 and 1482 to 1526; these read LKKT…EEKE and DLEN…DFDR. Composition is skewed to basic and acidic residues over residues 253 to 277 and 1513 to 1526; these read KREERGKNKEETDVEIEKISEEKGT and PLKKQTDGKEDFDR.

This sequence belongs to the TIC214 family. As to quaternary structure, part of the Tic complex.

It is found in the plastid. The protein resides in the chloroplast inner membrane. In terms of biological role, involved in protein precursor import into chloroplasts. May be part of an intermediate translocation complex acting as a protein-conducting channel at the inner envelope. The sequence is that of Protein TIC 214 from Ranunculus macranthus (Large buttercup).